A 436-amino-acid chain; its full sequence is Voltage-gated purine nucleotide uniporter SLC17A9 (436 aa).

Transmembrane regions (helical) follow at residues 64–84 (IVLS…GHLG), 92–112 (VILL…LLAH), 118–138 (LAFM…YFPA), 158–178 (IVGA…SLLL), 181–201 (YGWQ…VWYV), 239–259 (PAVW…FILL), 276–296 (WIFN…SGFL), 316–336 (GMGL…SSFC), 369–389 (GFLF…GVCL), and 402–422 (CLFN…LVFG).

This sequence belongs to the major facilitator superfamily. Sodium/anion cotransporter family. In terms of tissue distribution, widely expressed, but more predominantly in adrenal gland, brain and thyroid.

The protein localises to the cytoplasmic vesicle. It localises to the secretory vesicle. It is found in the chromaffin granule membrane. Its subcellular location is the secretory vesicle membrane. The protein resides in the lysosome membrane. It catalyses the reaction ATP(in) = ATP(out). The catalysed reaction is ADP(in) = ADP(out). The enzyme catalyses GTP(in) = GTP(out). Activity is chloride-dependent. Inhibited by AMP-PNP, gammaS-ATP, diadenosine triphosphate, 4,4'- diisothiocyanatostilbene-2,2'-disulfonate (DIDS) and Evans blue. Voltage-gated ATP nucleotide uniporter that can also transport the purine nucleotides ADP and GTP. Uses the membrane potential as the driving force to control ATP accumulation in lysosomes and secretory vesicles. By controlling ATP storage in lysosomes, regulates ATP-dependent proteins of these organelles. Also indirectly regulates the exocytosis of ATP through its import into lysosomes in astrocytes and secretory vesicles such as adrenal chromaffin granules, mucin granules and synaptic vesicles. The chain is Voltage-gated purine nucleotide uniporter SLC17A9 from Homo sapiens (Human).